The chain runs to 246 residues: Mast cell protease 1 (246 aa).

The first 18 residues, 1–18 (MQALLFLMALLLPSGAGA), serve as a signal peptide directing secretion. Residues 19 to 20 (EE) constitute a propeptide, activation peptide. The Peptidase S1 domain maps to 21 to 244 (IIGGVEARPH…YVPWIKTVIN (224 aa)). Cysteines 50 and 66 form a disulfide. The active-site Charge relay system is the H65. N-linked (GlcNAc...) asparagine glycosylation is present at N102. D109 (charge relay system) is an active-site residue. Disulfide bonds link C143–C208 and C174–C187. S202 (charge relay system) is an active-site residue.

Belongs to the peptidase S1 family. Granzyme subfamily. In terms of tissue distribution, mucosal mast cells.

It is found in the secreted. Its subcellular location is the cytoplasmic granule. Functionally, has a chymotrypsin-like activity. In Mus musculus (Mouse), this protein is Mast cell protease 1 (Mcpt1).